Here is a 99-residue protein sequence, read N- to C-terminus: Small ribosomal subunit protein bS18 (99 aa).

The disordered stretch occupies residues 1-25 (MAESKGRPGSASQRPTGGDKAIAGQ).

Belongs to the bacterial ribosomal protein bS18 family. As to quaternary structure, part of the 30S ribosomal subunit. Forms a tight heterodimer with protein bS6.

Functionally, binds as a heterodimer with protein bS6 to the central domain of the 16S rRNA, where it helps stabilize the platform of the 30S subunit. The sequence is that of Small ribosomal subunit protein bS18 from Solibacter usitatus (strain Ellin6076).